A 267-amino-acid polypeptide reads, in one-letter code: B3 domain-containing protein At3g11580 (267 aa).

The segment at residues 29–143 (FEKSLTPSDV…RLFIGWRRRG (115 aa)) is a DNA-binding region (TF-B3).

The protein localises to the nucleus. In Arabidopsis thaliana (Mouse-ear cress), this protein is B3 domain-containing protein At3g11580 (ARF32).